The chain runs to 384 residues: MTNSSSTSTSSTTGGSLLLLCEEEESWAGRRIPVSLLYSGLAIGGTLANGMVIYLVSSFRKLQTTSNAFIVNGCAADLSVCALWMPQEAVLGLLPTGSAEPPADWDGAGGSYRLLRGGLLGLGLTVSLLSHCLVALNRYLLITRAPATYQALYQRRHTAGMLALSWALALGLVLLLPPWAPRPGAAPPRVHYPALLAAAALLAQTALLLHCYLGIVRRVRVSVKRVSVLNFHLLHQLPGCAAAAAAFPGAQHAPGPGGAAHPAQAQPLPPALHPRRAQRRLSGLSVLLLCCVFLLATQPLVWVSLASGFSLPVPWGVQAASWLLCCALSALNPLLYTWRNEEFRRSVRSVLPGVGDAAAAAVAATAVPAVSQAQLGTRAAGQHW.

The Extracellular portion of the chain corresponds to 1 to 35; sequence MTNSSSTSTSSTTGGSLLLLCEEEESWAGRRIPVS. An N-linked (GlcNAc...) asparagine glycan is attached at asparagine 3. Residues 36 to 56 form a helical membrane-spanning segment; the sequence is LLYSGLAIGGTLANGMVIYLV. The Cytoplasmic portion of the chain corresponds to 57–73; sequence SSFRKLQTTSNAFIVNG. The helical transmembrane segment at 74-94 threads the bilayer; that stretch reads CAADLSVCALWMPQEAVLGLL. The Extracellular segment spans residues 95–116; sequence PTGSAEPPADWDGAGGSYRLLR. Residues 117-136 form a helical membrane-spanning segment; it reads GGLLGLGLTVSLLSHCLVAL. Over 137–158 the chain is Cytoplasmic; that stretch reads NRYLLITRAPATYQALYQRRHT. Residues 159–179 form a helical membrane-spanning segment; the sequence is AGMLALSWALALGLVLLLPPW. Residues 180-195 lie on the Extracellular side of the membrane; sequence APRPGAAPPRVHYPAL. Residues 196-216 traverse the membrane as a helical segment; that stretch reads LAAAALLAQTALLLHCYLGIV. The Cytoplasmic segment spans residues 217 to 285; that stretch reads RRVRVSVKRV…RAQRRLSGLS (69 aa). The helical transmembrane segment at 286–306 threads the bilayer; sequence VLLLCCVFLLATQPLVWVSLA. The Extracellular portion of the chain corresponds to 307-310; sequence SGFS. Residues 311–331 traverse the membrane as a helical segment; sequence LPVPWGVQAASWLLCCALSAL. The Cytoplasmic segment spans residues 332 to 384; sequence NPLLYTWRNEEFRRSVRSVLPGVGDAAAAAVAATAVPAVSQAQLGTRAAGQHW.

This sequence belongs to the G-protein coupled receptor 1 family. As to expression, expressed predominantly in the striatum.

It is found in the cell membrane. It localises to the cell projection. Its subcellular location is the cilium membrane. The protein localises to the cytoplasm. The protein resides in the nucleus. In terms of biological role, orphan G protein-coupled receptor implicated in a large repertoire of behavioral responses that engage motor activities, spatial learning, and emotional processing. May play a role in the regulation of cognitive and motor function. Couples with the heterotrimeric G protein complex of the G(i) subfamily, consisting of GNAI1, GNB1 and GNG2, thereby acting through a G(i)-mediated pathway. Plays a role in the attenuation of D1 dopamine receptor (D1R)-mediated cAMP response in ciliated cells. In non-ciliated cells, involved in the inhibition of the beta-2 adrenergic receptor (B2AR) response. This Homo sapiens (Human) protein is G protein-coupled receptor 88 (GPR88).